We begin with the raw amino-acid sequence, 210 residues long: Phosphoenolpyruvate guanylyltransferase (210 aa).

Phosphoenolpyruvate is bound by residues Thr130, Gly146, and Ser149.

Belongs to the CofC family.

The enzyme catalyses phosphoenolpyruvate + GTP + H(+) = enolpyruvoyl-2-diphospho-5'-guanosine + diphosphate. It functions in the pathway cofactor biosynthesis; coenzyme F420 biosynthesis. Its function is as follows. Guanylyltransferase that catalyzes the activation of phosphoenolpyruvate (PEP) as enolpyruvoyl-2-diphospho-5'-guanosine, via the condensation of PEP with GTP. It is involved in the biosynthesis of coenzyme F420, a hydride carrier cofactor. This is Phosphoenolpyruvate guanylyltransferase from Roseiflexus castenholzii (strain DSM 13941 / HLO8).